A 121-amino-acid chain; its full sequence is Non-structural protein 8 (121 aa).

A signal peptide spans 1 to 15 (MKLLIVFGLLTSVYC). An SARS ORF8 Ig-like domain is found at 19 to 121 (ECSIQECCEN…HDVRVVLDFI (103 aa)). 3 disulfides stabilise this stretch: Cys-25/Cys-90, Cys-37/Cys-102, and Cys-61/Cys-83.

The chain is Non-structural protein 8 from Rhinolophus macrotis (Big-eared horseshoe bat).